Reading from the N-terminus, the 195-residue chain is Small ribosomal subunit protein uS4B (195 aa).

The 75-residue stretch at 107–181 (RRLQTQVYKL…VARRNAARKA (75 aa)) folds into the S4 RNA-binding domain. The segment at 161–195 (TSPFGGARPGRVARRNAARKAEASGEAAEEAEDEE) is disordered. Lysine 180 is covalently cross-linked (Glycyl lysine isopeptide (Lys-Gly) (interchain with G-Cter in ubiquitin)). Serine 184 bears the Phosphoserine mark.

It belongs to the universal ribosomal protein uS4 family. Component of the small ribosomal subunit (SSU). Mature yeast ribosomes consist of a small (40S) and a large (60S) subunit. The 40S small subunit contains 1 molecule of ribosomal RNA (18S rRNA) and 33 different proteins (encoded by 57 genes). The large 60S subunit contains 3 rRNA molecules (25S, 5.8S and 5S rRNA) and 46 different proteins (encoded by 81 genes). Interacts with snoRNA U3. uS11 interacts with MPP10. Component of the ribosomal small subunit (SSU) processome composed of at least 40 protein subunits and snoRNA U3.

It localises to the cytoplasm. It is found in the nucleus. Its subcellular location is the nucleolus. Functionally, component of the ribosome, a large ribonucleoprotein complex responsible for the synthesis of proteins in the cell. The small ribosomal subunit (SSU) binds messenger RNAs (mRNAs) and translates the encoded message by selecting cognate aminoacyl-transfer RNA (tRNA) molecules. The large subunit (LSU) contains the ribosomal catalytic site termed the peptidyl transferase center (PTC), which catalyzes the formation of peptide bonds, thereby polymerizing the amino acids delivered by tRNAs into a polypeptide chain. The nascent polypeptides leave the ribosome through a tunnel in the LSU and interact with protein factors that function in enzymatic processing, targeting, and the membrane insertion of nascent chains at the exit of the ribosomal tunnel. uS4 is involved in nucleolar processing of pre-18S ribosomal RNA and ribosome assembly. The protein is Small ribosomal subunit protein uS4B of Saccharomyces cerevisiae (strain ATCC 204508 / S288c) (Baker's yeast).